Consider the following 524-residue polypeptide: MSTLRDNWRVIFLVAAILLSTFALFSPTMGNQSPIGEDDSATNLQFGLQLDGGTRIRAPLVGVTAEDVEFEGDSERVVERQVAAQIAGADAADIIVRTGAESSTVEATIENVTADDLSAALDAAGYAHGEVRDGVTGTTRAETVRVLQSKINEAGLSGGTVQQVTTATGEHFILVEVPNRDQSDVVDLVGERGTVQIDIYYPTGTDNGSRTYETREAVLTQADFTSIGTAQESQTGSGAFVPVSVRDDPAAEFQTAIQDTGLAQPGGTRCTYMEDGGRNTTEGCLLLVVNGEVVNAFGMSGGLADTMRAGEWAGAPSFQLQTRNTSEAQEIAINLRAGALPARLDLSGEDSGTSSYISPSQGESFKFDSLITGIVAVLAVAGVVFIRYGKPQVALPMIVTGLSEVYILLGFAAAIGYPLDLSVIAGFIAVIGTGVDDLIIIADEVMGEGSVKSRKVFQSRFRRAFWVIGAAAATTIIAMSPLAVLSLGDLQGFAIFTILGVIVGVLVTRPAYGDILRLLLTEDR.

6 helical membrane passes run 10–30 (VIFL…PTMG), 366–386 (KFDS…VVFI), 389–409 (GKPQ…YILL), 420–442 (DLSV…IIIA), 465–485 (FWVI…LAVL), and 487–507 (LGDL…GVLV).

Belongs to the SecD/SecF family. SecD subfamily. As to quaternary structure, part of the protein translocation apparatus. Forms a homodimer and complexes with SecF.

Its subcellular location is the cell membrane. In terms of biological role, involved in protein export. The chain is Protein-export membrane protein SecD from Haloferax volcanii (strain ATCC 29605 / DSM 3757 / JCM 8879 / NBRC 14742 / NCIMB 2012 / VKM B-1768 / DS2) (Halobacterium volcanii).